A 325-amino-acid polypeptide reads, in one-letter code: Eukaryotic translation initiation factor 3 subunit I (325 aa).

5 WD repeats span residues M1 to S39, E43 to C81, L87 to L127, N135 to A175, and V180 to S217. Phosphothreonine is present on T219. WD repeat units lie at residues E221–A267 and E275–P316. N6-acetyllysine is present on K264. A Glycyl lysine isopeptide (Lys-Gly) (interchain with G-Cter in ubiquitin) cross-link involves residue K282. Phosphotyrosine is present on Y308.

In terms of assembly, component of the eukaryotic translation initiation factor 3 (eIF-3) complex, which is composed of 13 subunits: EIF3A, EIF3B, EIF3C, EIF3D, EIF3E, EIF3F, EIF3G, EIF3H, EIF3I, EIF3J, EIF3K, EIF3L and EIF3M. The eIF-3 complex appears to include 3 stable modules: module A is composed of EIF3A, EIF3B, EIF3G and EIF3I; module B is composed of EIF3F, EIF3H, and EIF3M; and module C is composed of EIF3C, EIF3D, EIF3E, EIF3K and EIF3L. EIF3C of module C binds EIF3B of module A and EIF3H of module B, thereby linking the three modules. EIF3J is a labile subunit that binds to the eIF-3 complex via EIF3B. The eIF-3 complex interacts with RPS6KB1 under conditions of nutrient depletion. Mitogenic stimulation leads to binding and activation of a complex composed of MTOR and RPTOR, leading to phosphorylation and release of RPS6KB1 and binding of EIF4B to eIF-3. Phosphorylated by TGF-beta type II receptor.

Its subcellular location is the cytoplasm. Its function is as follows. Component of the eukaryotic translation initiation factor 3 (eIF-3) complex, which is required for several steps in the initiation of protein synthesis. The eIF-3 complex associates with the 40S ribosome and facilitates the recruitment of eIF-1, eIF-1A, eIF-2:GTP:methionyl-tRNAi and eIF-5 to form the 43S pre-initiation complex (43S PIC). The eIF-3 complex stimulates mRNA recruitment to the 43S PIC and scanning of the mRNA for AUG recognition. The eIF-3 complex is also required for disassembly and recycling of post-termination ribosomal complexes and subsequently prevents premature joining of the 40S and 60S ribosomal subunits prior to initiation. The eIF-3 complex specifically targets and initiates translation of a subset of mRNAs involved in cell proliferation, including cell cycling, differentiation and apoptosis, and uses different modes of RNA stem-loop binding to exert either translational activation or repression. This is Eukaryotic translation initiation factor 3 subunit I from Homo sapiens (Human).